Here is a 477-residue protein sequence, read N- to C-terminus: Peroxisome proliferator-activated receptor gamma (477 aa).

Ser-87 is subject to Phosphoserine; by MAPK. Positions 110–184 form a DNA-binding region, nuclear receptor; the sequence is AIECRVCGDK…VGMSHNAIRF (75 aa). 2 consecutive NR C4-type zinc fingers follow at residues 113 to 133 and 150 to 172; these read CRVC…CEGC and CDLN…FQKC. Residues 231-281 are disordered; it reads TKAKAPGHPDGQSHRQNSRGYTRHELADDGGGSDQGAVREPRAEQGGGDSN. The 224-residue stretch at 252–475 folds into the NR LBD domain; sequence TRHELADDGG…HPLLQEIYKD (224 aa). A 9aaTAD motif is present at residues 467 to 475; the sequence is PLLQEIYKD.

It belongs to the nuclear hormone receptor family. NR1 subfamily. Heterodimer with the retinoid X receptor. Expressed mainly in adipose tissue and kidney.

The protein localises to the nucleus. It localises to the cytoplasm. Its function is as follows. Receptor that binds peroxisome proliferators such as hypolipidemic drugs and fatty acids. Once activated by a ligand, the receptor binds to a promoter element in the gene for acyl-CoA oxidase and activates its transcription. It therefore controls the peroxisomal beta-oxidation pathway of fatty acids. Key regulator of adipocyte differentiation and glucose homeostasis. May play a role in the regulation of circadian rhythm. The polypeptide is Peroxisome proliferator-activated receptor gamma (pparg) (Xenopus laevis (African clawed frog)).